A 246-amino-acid polypeptide reads, in one-letter code: MADS-box transcription factor 14 (246 aa).

The MADS-box domain maps to 1 to 61 (MGRGKVQLKR…GKLYEYATDS (61 aa)). In terms of domain architecture, K-box spans 88–178 (QGNWCHEYRK…QKELVEKQKV (91 aa)). The tract at residues 180–199 (KQQVQWDQTQPQTSSSSSSF) is disordered.

In terms of assembly, may interact with the K-box of MADS1 and MADS6. In terms of tissue distribution, highly expressed in sterile lemmas, at intermediate levels in stamens, and weakly in lemmas, paleas and carpels.

Its subcellular location is the nucleus. Probable transcription factor. May be involved in the control of flowering time. This Oryza sativa subsp. japonica (Rice) protein is MADS-box transcription factor 14 (MADS14).